The chain runs to 235 residues: Phosphoribosylaminoimidazole-succinocarboxamide synthase (235 aa).

Belongs to the SAICAR synthetase family.

It catalyses the reaction 5-amino-1-(5-phospho-D-ribosyl)imidazole-4-carboxylate + L-aspartate + ATP = (2S)-2-[5-amino-1-(5-phospho-beta-D-ribosyl)imidazole-4-carboxamido]succinate + ADP + phosphate + 2 H(+). It functions in the pathway purine metabolism; IMP biosynthesis via de novo pathway; 5-amino-1-(5-phospho-D-ribosyl)imidazole-4-carboxamide from 5-amino-1-(5-phospho-D-ribosyl)imidazole-4-carboxylate: step 1/2. This chain is Phosphoribosylaminoimidazole-succinocarboxamide synthase, found in Streptococcus pneumoniae serotype 19F (strain G54).